The following is a 28-amino-acid chain: Putative fruR/shl operon leader peptide (28 aa).

The protein is Putative fruR/shl operon leader peptide (fruL) of Escherichia coli O6:H1 (strain CFT073 / ATCC 700928 / UPEC).